Here is a 473-residue protein sequence, read N- to C-terminus: Keratin, type I cuticular Ha6 (473 aa).

Residues 1–93 (MATQICTPTF…FCEGAFNGNE (93 aa)) form a head region. Residues 93 to 404 (EKATMQILND…RLLDGEDCKL (312 aa)) form the IF rod domain. Positions 94–128 (KATMQILNDRLANYLEKVRQLEQENTQLECRIREW) are coil 1A. A linker 1 region spans residues 129–139 (YECQIPYICPD). The coil 1B stretch occupies residues 140 to 240 (YQSYFKTAEE…HEEEVNALRS (101 aa)). The interval 241-256 (QLGDRLNVEVDAAPPV) is linker 12. The segment at 257–400 (DLNKILDDMR…ATYRRLLDGE (144 aa)) is coil 2. The tail stretch occupies residues 401 to 473 (DCKLPAHPCS…SREHVVPRAM (73 aa)).

Belongs to the intermediate filament family. In terms of assembly, heterotetramer of two type I and two type II keratins. As to expression, in skin, only expressed in the suprabasal cells of tail scale epidermis. Suprabasally expressed in stratified squamous epithelia and also in the posterior unit of the complex filiform papillae of tongue. Expressed in rare anatomical sites in which an orthokeratinized stratum corneum would be too soft and a hard keratinized structure would be too rigid to meet the functional requirement of the respective epithelia.

This chain is Keratin, type I cuticular Ha6, found in Mus musculus (Mouse).